The following is a 107-amino-acid chain: MTEAILRSTLGARTTVMAALSYLSVLCFVPLLVDRDDEFVYFHAKQGLVIWMWGVLALFALHVPVLGKWIFGFSSMGVLVFSLLGLVSVVFQRAWKLPLISWVAHRI.

Residues 1–13 (MTEAILRSTLGAR) lie on the Cytoplasmic side of the membrane. A helical membrane pass occupies residues 14-34 (TTVMAALSYLSVLCFVPLLVD). At 35–46 (RDDEFVYFHAKQ) the chain is on the lumenal side. The chain crosses the membrane as a helical span at residues 47–67 (GLVIWMWGVLALFALHVPVLG). The Cytoplasmic segment spans residues 68-69 (KW). A helical transmembrane segment spans residues 70–90 (IFGFSSMGVLVFSLLGLVSVV). Topologically, residues 91 to 107 (FQRAWKLPLISWVAHRI) are lumenal.

Belongs to the magnetosome MamF/MmsF protein family. In terms of assembly, may oligomerize.

It is found in the magnetosome membrane. Its function may be negatively regulated by one of the MamGFDC proteins. Plays a major role in synthesis of cubooctahedral magnetite crystals by controlling crystal growth and morphology after nucleation. Has a partially redundant function with MamF. When overexpressed in E.coli the soluble protein self assembles into shells of about 36 nm. This protein mediates the formation of magnetite nanoparticles from a solution of Fe(2+) and Fe(3+) sulfate; the crystals are larger and lack alternative iron oxide/oxyhydroxide species seen in the protein's absence. This chain is Magnetosome protein MmsF, found in Paramagnetospirillum magneticum (strain ATCC 700264 / AMB-1) (Magnetospirillum magneticum).